Consider the following 116-residue polypeptide: uncharacterized protein (116 aa).

This is an uncharacterized protein from Acidianus filamentous virus 1 (isolate United States/Yellowstone) (AFV-1).